The following is a 307-amino-acid chain: 4-hydroxy-tetrahydrodipicolinate synthase (307 aa).

Residue threonine 57 coordinates pyruvate. Tyrosine 145 acts as the Proton donor/acceptor in catalysis. The active-site Schiff-base intermediate with substrate is the lysine 173. Pyruvate is bound at residue valine 215.

It belongs to the DapA family. In terms of assembly, homotetramer; dimer of dimers.

It is found in the cytoplasm. It carries out the reaction L-aspartate 4-semialdehyde + pyruvate = (2S,4S)-4-hydroxy-2,3,4,5-tetrahydrodipicolinate + H2O + H(+). It functions in the pathway amino-acid biosynthesis; L-lysine biosynthesis via DAP pathway; (S)-tetrahydrodipicolinate from L-aspartate: step 3/4. Catalyzes the condensation of (S)-aspartate-beta-semialdehyde [(S)-ASA] and pyruvate to 4-hydroxy-tetrahydrodipicolinate (HTPA). This chain is 4-hydroxy-tetrahydrodipicolinate synthase, found in Leptospira interrogans serogroup Icterohaemorrhagiae serovar copenhageni (strain Fiocruz L1-130).